An 811-amino-acid polypeptide reads, in one-letter code: Probable inorganic carbon transporter subunit DabA (811 aa).

The Zn(2+) site is built by C336, D338, H498, and C513.

Belongs to the inorganic carbon transporter (TC 9.A.2) DabA family. As to quaternary structure, forms a complex with DabB. Requires Zn(2+) as cofactor.

The protein localises to the cell inner membrane. Its function is as follows. Part of an energy-coupled inorganic carbon pump. The protein is Probable inorganic carbon transporter subunit DabA of Rhodospirillum centenum (strain ATCC 51521 / SW).